The primary structure comprises 328 residues: MIFSILEHILTHISFSVVSIVLTIYFLTLLVNLDEIIGFFDSSDKGIIITFFCITGLLFTRWIYSGHFPLSNLYESLIFLSWSFSIIHMVSYFNKKQQNHLNAITAPSAIFIQGFATSGLLNKMPQSAILVPALQSQWLMMHVSMMILGYGALLCGSLLSIALLVITFRKVGPTFWKKNIKKKFLLNELFSFDVLYYINERNSILLQQNINFSFSRNYYRYQLIQQLDFWSFRIISLGFIFLTVGILSGAVWANETWGSYWNWDPKETWAFITWTIFAIYLHIKTNRNVRDINSAIVASIGFLLIWICYFGVNLLGIGLHSYGSFTSN.

A run of 8 helical transmembrane segments spans residues 13–33 (ISFS…LVNL), 46–66 (GIII…IYSG), 73–93 (LYES…VSYF), 101–121 (LNAI…SGLL), 146–166 (MILG…LLVI), 234–254 (IISL…VWAN), 263–283 (WDPK…YLHI), and 295–315 (AIVA…VNLL).

It belongs to the CcmF/CycK/Ccl1/NrfE/CcsA family. As to quaternary structure, may interact with Ccs1.

Its subcellular location is the plastid. The protein localises to the chloroplast thylakoid membrane. Its function is as follows. Required during biogenesis of c-type cytochromes (cytochrome c6 and cytochrome f) at the step of heme attachment. This is Cytochrome c biogenesis protein CcsA from Capsella bursa-pastoris (Shepherd's purse).